The sequence spans 1156 residues: Protein hu-li tai shao (1156 aa).

The segment at 1–36 (MTEVEQPPQNGIDPTAGEDDDNSKARPADIEQDMRE) is disordered. A compositionally biased stretch (basic and acidic residues) spans 22-36 (NSKARPADIEQDMRE). Ser478 is subject to Phosphoserine. Phosphothreonine occurs at positions 480 and 498. A Phosphoserine modification is found at Ser603. Residue Tyr608 is modified to Phosphotyrosine. Phosphothreonine occurs at positions 609 and 611. Ser614 carries the post-translational modification Phosphoserine. A Phosphotyrosine modification is found at Tyr627. Residue Ser630 is modified to Phosphoserine. A disordered region spans residues 897 to 956 (FLPSNHALPKDTDANNRDQTDRERPEAEQEESFHCAGDSGIGDSTGRRPRLATTSNDSSI). A compositionally biased stretch (basic and acidic residues) spans 904–929 (LPKDTDANNRDQTDRERPEAEQEESF).

It belongs to the aldolase class II family. Adducin subfamily. As to expression, isoform C is expressed in nurse cells. Isoform A is produced in the nurse cell but transported into the oocyte at stage 1, localizes to the oocyte cortex at stage 8 and to the anterior pole from day 9 onwards. Isoform B is expressed in the somatic follicle cells that surround the germline.

It localises to the cytoplasm. The protein localises to the cytoskeleton. The protein resides in the cell membrane. In terms of biological role, required for assembling actin at ring canals in developing egg chambers. Probably interacts with other developmental proteins involved in nurse cell/oocyte transport through the ring canals. Important for normal neuromotor function. In Drosophila melanogaster (Fruit fly), this protein is Protein hu-li tai shao (hts).